We begin with the raw amino-acid sequence, 193 residues long: Ion-translocating oxidoreductase complex subunit A (193 aa).

6 consecutive transmembrane segments (helical) span residues 5 to 25, 47 to 67, 72 to 92, 102 to 122, 134 to 154, and 171 to 191; these read LLLF…FLGL, FVMT…LIPL, LRTM…EMVV, LLGI…VALL, ALYG…FAAI, and AIAL…SGLV.

The protein belongs to the NqrDE/RnfAE family. The complex is composed of six subunits: RsxA, RsxB, RsxC, RsxD, RsxE and RsxG.

Its subcellular location is the cell inner membrane. Part of a membrane-bound complex that couples electron transfer with translocation of ions across the membrane. Required to maintain the reduced state of SoxR. The polypeptide is Ion-translocating oxidoreductase complex subunit A (Escherichia coli O45:K1 (strain S88 / ExPEC)).